The sequence spans 564 residues: E3 ubiquitin-protein ligase TRIM16 (564 aa).

The tract at residues methionine 1–glycine 70 is disordered. Residues serine 24–proline 39 show a composition bias toward low complexity. 2 B box-type zinc fingers span residues glycine 72–proline 122 and histidine 126–leucine 165. Residue serine 116 is modified to Phosphoserine. 4 residues coordinate Zn(2+): cysteine 131, histidine 134, cysteine 153, and histidine 157. 3 coiled-coil regions span residues leucine 165–serine 203, alanine 243–alanine 274, and histidine 320–glutamate 340. Phosphoserine is present on serine 203. One can recognise a B30.2/SPRY domain in the interval tyrosine 355–glutamate 553.

This sequence belongs to the TRIM/RBCC family. As to quaternary structure, homodimerizes via its coiled-coil domain. Heterodimerizes with MID1, TRIM24 and PML. Interacts with Galectin-3/LGALS3 in a ULK1-dependent manner; this interaction mediates autophagy of damage endomembranes. Interacts with BECN1. Interacts with ATG16L1. Interacts with p62/SQSTM and LC3B/MAP1LC3B. Post-translationally, phosphorylated by ULK1. In terms of processing, auto-ubiquitinates via its B-Boxes.

The protein localises to the cytoplasm. The enzyme catalyses S-ubiquitinyl-[E2 ubiquitin-conjugating enzyme]-L-cysteine + [acceptor protein]-L-lysine = [E2 ubiquitin-conjugating enzyme]-L-cysteine + N(6)-ubiquitinyl-[acceptor protein]-L-lysine.. Functionally, E3 ubiquitin ligase that plays an essential role in the organization of autophagic response and ubiquitination upon lysosomal and phagosomal damages. Plays a role in the stress-induced biogenesis and degradation of protein aggresomes by regulating the p62-KEAP1-NRF2 signaling and particularly by modulating the ubiquitination levels and thus stability of NRF2. Acts as a scaffold protein and facilitates autophagic degradation of protein aggregates by interacting with p62/SQSTM, ATG16L1 and LC3B/MAP1LC3B. In turn, protects the cell against oxidative stress-induced cell death as a consequence of endomembrane damage. The protein is E3 ubiquitin-protein ligase TRIM16 (TRIM16) of Pongo abelii (Sumatran orangutan).